Reading from the N-terminus, the 404-residue chain is Advanced glycosylation end product-specific receptor (404 aa).

An N-terminal signal peptide occupies residues 1–22; the sequence is MAAGTAVGAWVLVLSLWGAVVG. In terms of domain architecture, Ig-like V-type spans 23-116; it reads AQNITARIGE…KETKSNYRVR (94 aa). The Extracellular portion of the chain corresponds to 23-342; sequence AQNITARIGE…VGGSGLGTLA (320 aa). Asn-25 and Asn-81 each carry an N-linked (GlcNAc...) asparagine glycan. Cystine bridges form between Cys-38–Cys-99 and Cys-144–Cys-208. 2 Ig-like C2-type domains span residues 124 to 221 and 227 to 317; these read PEIV…RALR and PRVW…RAVS. A helical transmembrane segment spans residues 343–363; it reads LALGILGGLGTAALLIGVILW. At 364 to 404 the chain is on the cytoplasmic side; it reads QRRQRRGEERKAPENQEEEEERAELNQSEEPEAGESSTGGP. The interval 367-404 is disordered; that stretch reads QRRGEERKAPENQEEEEERAELNQSEEPEAGESSTGGP. Residues 378 to 396 are compositionally biased toward acidic residues; it reads NQEEEEERAELNQSEEPEA. A Phosphoserine; by PKC/PRKCZ and ATM modification is found at Ser-391.

Constitutive homodimer; disulfide-linked. Forms homooligomers. Interacts with S100A1 and APP. Interacts with S100B, S100A12 and S100A14. Interacts with TIRAP. Interacts with HMGB1. Interacts with LGP2; this interaction plays an important role in AGER-mediated pro-inflammatory responses and cytokine release. Interacts with double-strand break repair protein MRE11 which is a core component of the MRN complex. The interaction enhances MRE11 endonuclease activity and promotes DNA repair. Interacts with the MCM2-7 complex via interaction with complex member MCM2; the interaction is increased following DNA replication stress and stabilizes the MCM2-7 complex at replication forks. Interacts with longistatin, a protein from the saliva of the tick, Haemaphysalis longicornis; the interaction attenuates AGER-mediated production of reactive oxygen species (ROS), activation of NF-kappa-B and expression of adhesion molecules and cytokines in human endothelial cells. Phosphorylated on its cytoplasmic domain by PKCzeta/PRKCZ upon ligand binding. Phosphorylated by ATM following DNA damage. Post-translationally, targeted by the ubiquitin E3 ligase subunit FBXO10 to mediate its ubiquitination and degradation. Endothelial cells. Increased expression in pre-term labor and preeclampsia placentas compared to controls.

The protein resides in the cell membrane. It localises to the cell projection. It is found in the phagocytic cup. Its subcellular location is the early endosome. The protein localises to the nucleus. The protein resides in the secreted. In terms of biological role, cell surface pattern recognition receptor that senses endogenous stress signals with a broad ligand repertoire including advanced glycation end products, S100 proteins, high-mobility group box 1 protein/HMGB1, amyloid beta/APP oligomers, nucleic acids, histones, phospholipids and glycosaminoglycans. Advanced glycosylation end products are nonenzymatically glycosylated proteins which accumulate in vascular tissue in aging and at an accelerated rate in diabetes. These ligands accumulate at inflammatory sites during the pathogenesis of various diseases including diabetes, vascular complications, neurodegenerative disorders and cancers, and RAGE transduces their binding into pro-inflammatory responses. Upon ligand binding, uses TIRAP and MYD88 as adapters to transduce the signal ultimately leading to the induction of inflammatory cytokines IL6, IL8 and TNFalpha through activation of NF-kappa-B. Interaction with S100A12 on endothelium, mononuclear phagocytes, and lymphocytes triggers cellular activation, with generation of key pro-inflammatory mediators. Interaction with S100B after myocardial infarction may play a role in myocyte apoptosis by activating ERK1/2 and p53/TP53 signaling. Contributes to the translocation of amyloid-beta peptide (ABPP) across the cell membrane from the extracellular to the intracellular space in cortical neurons. ABPP-initiated RAGE signaling, especially stimulation of p38 mitogen-activated protein kinase (MAPK), has the capacity to drive a transport system delivering ABPP as a complex with RAGE to the intraneuronal space. Participates in endothelial albumin transcytosis together with HMGB1 through the RAGE/SRC/Caveolin-1 pathway, leading to endothelial hyperpermeability. Mediates the loading of HMGB1 in extracellular vesicles (EVs) that shuttle HMGB1 to hepatocytes by transferrin-mediated endocytosis and subsequently promote hepatocyte pyroptosis by activating the NLRP3 inflammasome. Binds to DNA and promotes extracellular hypomethylated DNA (CpG DNA) uptake by cells via the endosomal route to activate inflammatory responses. Mediates phagocytosis by non-professional phagocytes (NPP) and this is enhanced by binding to ligands including RNA, DNA, HMGB1 and histones. Promotes NPP-mediated phagocytosis of Saccharomyces cerevisiae spores by binding to RNA attached to the spore wall. Also promotes NPP-mediated phagocytosis of apoptotic cells. Following DNA damage, recruited to DNA double-strand break sites where it colocalizes with the MRN repair complex via interaction with double-strand break repair protein MRE11. Enhances the endonuclease activity of MRE11, promoting the end resection of damaged DNA. Promotes DNA damage repair in trophoblasts which enhances trophoblast invasion and contributes to placental development and maintenance. Protects cells from DNA replication stress by localizing to damaged replication forks where it stabilizes the MCM2-7 complex and promotes faithful progression of the replication fork. Mediates the production of reactive oxygen species (ROS) in human endothelial cells. This chain is Advanced glycosylation end product-specific receptor (AGER), found in Homo sapiens (Human).